Here is a 170-residue protein sequence, read N- to C-terminus: uncharacterized protein (170 aa).

This is an uncharacterized protein from Acidithiobacillus ferrooxidans (Thiobacillus ferrooxidans).